Reading from the N-terminus, the 287-residue chain is Ribosomal RNA-processing protein 8 (287 aa).

Residues 1–62 are disordered; it reads MTTEENKTSR…SAPSKRPKPS (62 aa). Over residues 9 to 21 the composition is skewed to basic residues; it reads SRNRKRKRQRNPK. A compositionally biased stretch (basic and acidic residues) spans 35–46; the sequence is QNEKKNQRDTKN. His-107, Gly-142, Asp-160, Asp-172, Met-173, and Cys-189 together coordinate S-adenosyl-L-methionine.

Belongs to the methyltransferase superfamily. RRP8 family.

It localises to the nucleus. The protein resides in the nucleolus. Its function is as follows. Probable methyltransferase required to silence rDNA. This Arabidopsis thaliana (Mouse-ear cress) protein is Ribosomal RNA-processing protein 8.